The chain runs to 673 residues: DNA ligase (673 aa).

NAD(+) is bound by residues Asp32–Asp36, Ser81–Leu82, and Glu111. The active-site N6-AMP-lysine intermediate is the Lys113. Residues Arg134, Glu171, Lys286, and Lys310 each coordinate NAD(+). Residues Cys404, Cys407, Cys422, and Cys428 each coordinate Zn(2+). The BRCT domain maps to Asn595–Phe673.

This sequence belongs to the NAD-dependent DNA ligase family. LigA subfamily. It depends on Mg(2+) as a cofactor. Requires Mn(2+) as cofactor.

It carries out the reaction NAD(+) + (deoxyribonucleotide)n-3'-hydroxyl + 5'-phospho-(deoxyribonucleotide)m = (deoxyribonucleotide)n+m + AMP + beta-nicotinamide D-nucleotide.. DNA ligase that catalyzes the formation of phosphodiester linkages between 5'-phosphoryl and 3'-hydroxyl groups in double-stranded DNA using NAD as a coenzyme and as the energy source for the reaction. It is essential for DNA replication and repair of damaged DNA. The chain is DNA ligase from Ureaplasma urealyticum serovar 10 (strain ATCC 33699 / Western).